Consider the following 206-residue polypeptide: Probable GTP-binding protein EngB (206 aa).

An EngB-type G domain is found at 29–201 (ILPEVAVVGR…MIMIQDALND (173 aa)). Residues 37-44 (GRSNVGKS), 64-68 (GKTQA), 82-85 (DLPG), 149-152 (TKID), and 180-182 (YSV) each bind GTP. The Mg(2+) site is built by S44 and T66.

Belongs to the TRAFAC class TrmE-Era-EngA-EngB-Septin-like GTPase superfamily. EngB GTPase family. Mg(2+) serves as cofactor.

Its function is as follows. Necessary for normal cell division and for the maintenance of normal septation. In Protochlamydia amoebophila (strain UWE25), this protein is Probable GTP-binding protein EngB.